The chain runs to 200 residues: MPVLPRDFYDRPTLEVARDLLGKTLVRQLPAGRVALRIVETEAYIGENDKACHASKGMTARNRVMFGQPGHAYVYLIYGMYNCLNLVTEKDGYPAAVLIRAGEPIEGEEIMSSLRPKARKHHEIASGPGKLCGAMSITRALNGADVCASGELYVEDGPAVKKIVACPRIGVDYAGEDALRPWRFYDKNSPCVSKRAPGDI.

Belongs to the DNA glycosylase MPG family.

The protein is Putative 3-methyladenine DNA glycosylase of Methanocella arvoryzae (strain DSM 22066 / NBRC 105507 / MRE50).